Consider the following 164-residue polypeptide: Large ribosomal subunit protein uL15 (164 aa).

Residues 1 to 33 (MTSKKRRQRGSRTHGGGTHKNRRGAGHRGGRGR) show a composition bias toward basic residues. Disordered stretches follow at residues 1–59 (MTSK…PGAE) and 137–164 (AGGS…NDEN). Residues 34–43 (AGRDKHEQHN) are compositionally biased toward basic and acidic residues. Positions 153–164 (GEDEEPNSNDEN) are enriched in acidic residues.

It belongs to the universal ribosomal protein uL15 family. In terms of assembly, part of the 50S ribosomal subunit.

Binds to the 23S rRNA. This Haloquadratum walsbyi (strain DSM 16790 / HBSQ001) protein is Large ribosomal subunit protein uL15.